A 473-amino-acid chain; its full sequence is Ribulose bisphosphate carboxylase large chain (473 aa).

Substrate contacts are provided by asparagine 116 and threonine 166. Lysine 168 serves as the catalytic Proton acceptor. Lysine 170 lines the substrate pocket. Mg(2+) contacts are provided by lysine 194, aspartate 196, and glutamate 197. An N6-carboxylysine modification is found at lysine 194. The active-site Proton acceptor is the histidine 287. The substrate site is built by arginine 288, histidine 320, and serine 372.

It belongs to the RuBisCO large chain family. Type I subfamily. As to quaternary structure, heterohexadecamer of 8 large chains and 8 small chains. It depends on Mg(2+) as a cofactor.

The enzyme catalyses 2 (2R)-3-phosphoglycerate + 2 H(+) = D-ribulose 1,5-bisphosphate + CO2 + H2O. It carries out the reaction D-ribulose 1,5-bisphosphate + O2 = 2-phosphoglycolate + (2R)-3-phosphoglycerate + 2 H(+). RuBisCO catalyzes two reactions: the carboxylation of D-ribulose 1,5-bisphosphate, the primary event in carbon dioxide fixation, as well as the oxidative fragmentation of the pentose substrate. Both reactions occur simultaneously and in competition at the same active site. The chain is Ribulose bisphosphate carboxylase large chain from Nitrobacter winogradskyi (Nitrobacter agilis).